The sequence spans 482 residues: UDP-N-acetylmuramoyl-L-alanyl-D-glutamate--2,6-diaminopimelate ligase (482 aa).

Residue Ser-29 participates in UDP-N-acetyl-alpha-D-muramoyl-L-alanyl-D-glutamate binding. Residue 109 to 115 (GTNGKTS) participates in ATP binding. UDP-N-acetyl-alpha-D-muramoyl-L-alanyl-D-glutamate-binding positions include 151-152 (TT), Ser-178, and Arg-186. Lys-218 carries the post-translational modification N6-carboxylysine. Meso-2,6-diaminopimelate is bound by residues Arg-375, 399 to 402 (DNPR), Gly-451, and Glu-455. A Meso-diaminopimelate recognition motif motif is present at residues 399-402 (DNPR).

It belongs to the MurCDEF family. MurE subfamily. It depends on Mg(2+) as a cofactor. Post-translationally, carboxylation is probably crucial for Mg(2+) binding and, consequently, for the gamma-phosphate positioning of ATP.

The protein resides in the cytoplasm. It carries out the reaction UDP-N-acetyl-alpha-D-muramoyl-L-alanyl-D-glutamate + meso-2,6-diaminopimelate + ATP = UDP-N-acetyl-alpha-D-muramoyl-L-alanyl-gamma-D-glutamyl-meso-2,6-diaminopimelate + ADP + phosphate + H(+). It participates in cell wall biogenesis; peptidoglycan biosynthesis. Functionally, catalyzes the addition of meso-diaminopimelic acid to the nucleotide precursor UDP-N-acetylmuramoyl-L-alanyl-D-glutamate (UMAG) in the biosynthesis of bacterial cell-wall peptidoglycan. This chain is UDP-N-acetylmuramoyl-L-alanyl-D-glutamate--2,6-diaminopimelate ligase, found in Caldanaerobacter subterraneus subsp. tengcongensis (strain DSM 15242 / JCM 11007 / NBRC 100824 / MB4) (Thermoanaerobacter tengcongensis).